The sequence spans 295 residues: 4-diphosphocytidyl-2-C-methyl-D-erythritol kinase (295 aa).

Lys25 is a catalytic residue. ATP is bound at residue 108–118 (PMGSGLGGGSS). Residue Asp150 is part of the active site.

It belongs to the GHMP kinase family. IspE subfamily.

It carries out the reaction 4-CDP-2-C-methyl-D-erythritol + ATP = 4-CDP-2-C-methyl-D-erythritol 2-phosphate + ADP + H(+). It functions in the pathway isoprenoid biosynthesis; isopentenyl diphosphate biosynthesis via DXP pathway; isopentenyl diphosphate from 1-deoxy-D-xylulose 5-phosphate: step 3/6. Catalyzes the phosphorylation of the position 2 hydroxy group of 4-diphosphocytidyl-2C-methyl-D-erythritol. In Pasteurella multocida (strain Pm70), this protein is 4-diphosphocytidyl-2-C-methyl-D-erythritol kinase.